The chain runs to 266 residues: Dolichol-phosphate mannosyltransferase subunit 1 (266 aa).

Residues 1 to 19 (MASPGASRGASAATAAAAS) show a composition bias toward low complexity. The segment at 1 to 31 (MASPGASRGASAATAAAASPRPPQGRSSRRD) is disordered. A2 is subject to N-acetylalanine. S3 bears the Phosphoserine mark. The GDP-alpha-D-mannose site is built by P38, Y40, E42, I69, D71, D124, A125, D126, R153, R240, and K246. A Mg(2+)-binding site is contributed by D126. D126 is a binding site for Mn(2+).

It belongs to the glycosyltransferase 2 family. Component of the dolichol-phosphate mannose (DPM) synthase complex composed of DPM1, DPM2 and DPM3; within the complex, directly interacts with DPM3. This interaction may stabilize DPM1. Mg(2+) serves as cofactor. It depends on Mn(2+) as a cofactor. Ca(2+) is required as a cofactor.

Its subcellular location is the endoplasmic reticulum. The enzyme catalyses a di-trans,poly-cis-dolichyl phosphate + GDP-alpha-D-mannose = a di-trans,poly-cis-dolichyl beta-D-mannosyl phosphate + GDP. It participates in protein modification; protein glycosylation. Transfers mannose from GDP-mannose to dolichol monophosphate to form dolichol phosphate mannose (Dol-P-Man) which is the mannosyl donor in pathways leading to N-glycosylation, glycosyl phosphatidylinositol membrane anchoring, and O-mannosylation of proteins; catalytic subunit of the dolichol-phosphate mannose (DPM) synthase complex. The polypeptide is Dolichol-phosphate mannosyltransferase subunit 1 (DPM1) (Cricetulus griseus (Chinese hamster)).